The chain runs to 263 residues: tRNA (guanine-N(1)-)-methyltransferase (263 aa).

Residues Gly113 and 137–142 (LGDYVL) contribute to the S-adenosyl-L-methionine site.

This sequence belongs to the RNA methyltransferase TrmD family. In terms of assembly, homodimer.

The protein resides in the cytoplasm. It carries out the reaction guanosine(37) in tRNA + S-adenosyl-L-methionine = N(1)-methylguanosine(37) in tRNA + S-adenosyl-L-homocysteine + H(+). Specifically methylates guanosine-37 in various tRNAs. The protein is tRNA (guanine-N(1)-)-methyltransferase of Renibacterium salmoninarum (strain ATCC 33209 / DSM 20767 / JCM 11484 / NBRC 15589 / NCIMB 2235).